Consider the following 144-residue polypeptide: Small ribosomal subunit protein bS6 (144 aa).

The segment at glutamate 97–glutamate 144 is disordered. Residues arginine 105–glutamate 137 show a composition bias toward basic and acidic residues.

It belongs to the bacterial ribosomal protein bS6 family.

Functionally, binds together with bS18 to 16S ribosomal RNA. The protein is Small ribosomal subunit protein bS6 of Afipia carboxidovorans (strain ATCC 49405 / DSM 1227 / KCTC 32145 / OM5) (Oligotropha carboxidovorans).